The primary structure comprises 1529 residues: uncharacterized protein (1529 aa).

Residues 1 to 11 (MDKNNNNNNSN) are compositionally biased toward low complexity. Disordered regions lie at residues 1–85 (MDKN…SKGV), 335–371 (LLSN…WSSS), 660–694 (LPNL…TATA), 798–843 (NCNI…SSYS), 1016–1035 (SSLP…NTNN), 1334–1364 (QQQQ…QLQQ), and 1454–1497 (QQQV…SRLP). Polar residues predominate over residues 24–42 (QKRVQNPSFSSGQSRTVPS). Low complexity predominate over residues 51–79 (ISSSSSSSSISTTNNTTTTTTSGTGSTSS). The segment covering 810–833 (NNNNNNNNNNNNNNNNNNNNNNNN) has biased composition (low complexity). 2 stretches are compositionally biased toward polar residues: residues 834 to 843 (VLPRSNSSYS) and 1016 to 1027 (SSLPISQNLSDD). The segment covering 1454-1494 (QQQVQTPSSPQTLASLLGNSSSNTLTSSSSTLSLNESSTLS) has biased composition (low complexity).

This is an uncharacterized protein from Dictyostelium discoideum (Social amoeba).